The chain runs to 209 residues: Small ribosomal subunit protein uS4 (209 aa).

Residues 23–46 (SRNPLLKKPHPPGQHGMQRKKKSD) form a disordered region. One can recognise an S4 RNA-binding domain in the interval 93–153 (CRLDNMVYRM…EKSKRLQSVK (61 aa)).

Belongs to the universal ribosomal protein uS4 family. Part of the 30S ribosomal subunit. Contacts protein S5. The interaction surface between S4 and S5 is involved in control of translational fidelity.

One of the primary rRNA binding proteins, it binds directly to 16S rRNA where it nucleates assembly of the body of the 30S subunit. Its function is as follows. With S5 and S12 plays an important role in translational accuracy. The protein is Small ribosomal subunit protein uS4 of Chlamydia pneumoniae (Chlamydophila pneumoniae).